The following is a 391-amino-acid chain: Protein-glutamate methylesterase/protein-glutamine glutaminase of group 2 operon (391 aa).

Residues 20-138 (RVMIVDDSVV…EPQAADIFKH (119 aa)) form the Response regulatory domain. Residue aspartate 71 is modified to 4-aspartylphosphate. The 188-residue stretch at 196–383 (PTAPRVLLIG…PLNQIGPKVV (188 aa)) folds into the CheB-type methylesterase domain. Catalysis depends on residues serine 207, histidine 235, and aspartate 331.

Belongs to the CheB family. In terms of processing, phosphorylated by CheA. Phosphorylation of the N-terminal regulatory domain activates the methylesterase activity.

The protein resides in the cytoplasm. The catalysed reaction is [protein]-L-glutamate 5-O-methyl ester + H2O = L-glutamyl-[protein] + methanol + H(+). It carries out the reaction L-glutaminyl-[protein] + H2O = L-glutamyl-[protein] + NH4(+). Functionally, involved in chemotaxis. Part of a chemotaxis signal transduction system that modulates chemotaxis in response to various stimuli. Catalyzes the demethylation of specific methylglutamate residues introduced into the chemoreceptors (methyl-accepting chemotaxis proteins or MCP) by CheR. Also mediates the irreversible deamidation of specific glutamine residues to glutamic acid. The sequence is that of Protein-glutamate methylesterase/protein-glutamine glutaminase of group 2 operon from Rhodopseudomonas palustris (strain ATCC BAA-98 / CGA009).